We begin with the raw amino-acid sequence, 98 residues long: Acylphosphatase (98 aa).

The 87-residue stretch at 10 to 96 (ARLLRIRGRV…TDGAGFDCLP (87 aa)) folds into the Acylphosphatase-like domain. Catalysis depends on residues Arg25 and Asn43.

The protein belongs to the acylphosphatase family.

It catalyses the reaction an acyl phosphate + H2O = a carboxylate + phosphate + H(+). This chain is Acylphosphatase (acyP), found in Azoarcus sp. (strain BH72).